A 130-amino-acid polypeptide reads, in one-letter code: Small ribosomal subunit protein uS11c (130 aa).

The protein belongs to the universal ribosomal protein uS11 family. In terms of assembly, part of the 30S ribosomal subunit.

It localises to the plastid. Its subcellular location is the chloroplast. In Physcomitrium patens (Spreading-leaved earth moss), this protein is Small ribosomal subunit protein uS11c.